An 830-amino-acid chain; its full sequence is Periplasmic nitrate reductase 2 (830 aa).

A signal peptide (tat-type signal) is located at residues 1 to 31; that stretch reads MKVSRRKFIKAQAVASAAAAAGISIPISASN. The region spanning 41–97 is the 4Fe-4S Mo/W bis-MGD-type domain; it reads ITWEKAPCRFCGTGCSVNVGTKEGKVVATHGDIKSPVNRGLNCVKGYFLSKIMYGKD. [4Fe-4S] cluster contacts are provided by Cys48, Cys51, Cys55, and Cys83. Mo-bis(molybdopterin guanine dinucleotide) is bound by residues Lys85, Gln152, Asn177, Cys181, 245–249, 264–266, Met374, Gln378, Asn484, 510–511, Lys533, Asp560, and 720–729; these read STFEH, QSD, SE, and TGRVIEHWHS. Residue Trp796 participates in substrate binding. The Mo-bis(molybdopterin guanine dinucleotide) site is built by Asn804 and Lys821.

The protein belongs to the prokaryotic molybdopterin-containing oxidoreductase family. NasA/NapA/NarB subfamily. In terms of assembly, component of the periplasmic nitrate reductase NapAB complex composed of NapA and NapB. [4Fe-4S] cluster is required as a cofactor. Mo-bis(molybdopterin guanine dinucleotide) serves as cofactor. Post-translationally, predicted to be exported by the Tat system. The position of the signal peptide cleavage has not been experimentally proven.

Its subcellular location is the periplasm. It carries out the reaction 2 Fe(II)-[cytochrome] + nitrate + 2 H(+) = 2 Fe(III)-[cytochrome] + nitrite + H2O. In terms of biological role, catalytic subunit of the periplasmic nitrate reductase complex NapAB. Receives electrons from NapB and catalyzes the reduction of nitrate to nitrite. The chain is Periplasmic nitrate reductase 2 from Photobacterium profundum (strain SS9).